The primary structure comprises 109 residues: Large ribosomal subunit protein uL22 (109 aa).

This sequence belongs to the universal ribosomal protein uL22 family. In terms of assembly, part of the 50S ribosomal subunit.

In terms of biological role, this protein binds specifically to 23S rRNA; its binding is stimulated by other ribosomal proteins, e.g. L4, L17, and L20. It is important during the early stages of 50S assembly. It makes multiple contacts with different domains of the 23S rRNA in the assembled 50S subunit and ribosome. Its function is as follows. The globular domain of the protein is located near the polypeptide exit tunnel on the outside of the subunit, while an extended beta-hairpin is found that lines the wall of the exit tunnel in the center of the 70S ribosome. The chain is Large ribosomal subunit protein uL22 from Leptothrix cholodnii (strain ATCC 51168 / LMG 8142 / SP-6) (Leptothrix discophora (strain SP-6)).